The primary structure comprises 469 residues: Glutamate--tRNA ligase 1 (469 aa).

Residues 10–20 (PSPTGYLHIGG) carry the 'HIGH' region motif. Residues Cys-99, Cys-101, Cys-126, and Asp-128 each coordinate Zn(2+). Residues 237-241 (RLSKR) carry the 'KMSKS' region motif. Lys-240 contributes to the ATP binding site.

The protein belongs to the class-I aminoacyl-tRNA synthetase family. Glutamate--tRNA ligase type 1 subfamily. In terms of assembly, monomer. Requires Zn(2+) as cofactor.

Its subcellular location is the cytoplasm. It carries out the reaction tRNA(Glu) + L-glutamate + ATP = L-glutamyl-tRNA(Glu) + AMP + diphosphate. In terms of biological role, catalyzes the attachment of glutamate to tRNA(Glu) in a two-step reaction: glutamate is first activated by ATP to form Glu-AMP and then transferred to the acceptor end of tRNA(Glu). The chain is Glutamate--tRNA ligase 1 from Coxiella burnetii (strain RSA 331 / Henzerling II).